Here is a 119-residue protein sequence, read N- to C-terminus: uncharacterized protein (119 aa).

The stretch at 1 to 29 (MKKVGEEEIKQEENEKEKIVKKLNESDVK) forms a coiled coil.

This is an uncharacterized protein from Acidianus sp. F28 (AFV-2).